Reading from the N-terminus, the 377-residue chain is uncharacterized protein (377 aa).

This is an uncharacterized protein from Bacillus subtilis (strain 168).